The primary structure comprises 631 residues: Probable electron transfer flavoprotein-ubiquinone oxidoreductase, mitochondrial (631 aa).

65-79 (VCIVGGGPAGLATAI) is a binding site for FAD. Residues Cys-574, Cys-600, Cys-603, and Cys-606 each coordinate [4Fe-4S] cluster. In terms of domain architecture, 4Fe-4S ferredoxin-type spans 591-620 (TRLQINSQNCIHCKTCDIKAPRQDITWKVP).

The protein belongs to the ETF-QO/FixC family. [4Fe-4S] cluster is required as a cofactor. FAD serves as cofactor.

The protein resides in the mitochondrion inner membrane. The catalysed reaction is a ubiquinone + reduced [electron-transfer flavoprotein] = a ubiquinol + oxidized [electron-transfer flavoprotein] + H(+). Its function is as follows. Accepts electrons from ETF and reduces ubiquinone. This Saccharomyces cerevisiae (strain ATCC 204508 / S288c) (Baker's yeast) protein is Probable electron transfer flavoprotein-ubiquinone oxidoreductase, mitochondrial (CIR2).